The following is a 184-amino-acid chain: Protein GrpE (184 aa).

It belongs to the GrpE family. Homodimer.

Its subcellular location is the cytoplasm. Functionally, participates actively in the response to hyperosmotic and heat shock by preventing the aggregation of stress-denatured proteins, in association with DnaK and GrpE. It is the nucleotide exchange factor for DnaK and may function as a thermosensor. Unfolded proteins bind initially to DnaJ; upon interaction with the DnaJ-bound protein, DnaK hydrolyzes its bound ATP, resulting in the formation of a stable complex. GrpE releases ADP from DnaK; ATP binding to DnaK triggers the release of the substrate protein, thus completing the reaction cycle. Several rounds of ATP-dependent interactions between DnaJ, DnaK and GrpE are required for fully efficient folding. The polypeptide is Protein GrpE (Pseudomonas putida (strain GB-1)).